Consider the following 117-residue polypeptide: Large ribosomal subunit protein bL19 (117 aa).

Belongs to the bacterial ribosomal protein bL19 family.

Its function is as follows. This protein is located at the 30S-50S ribosomal subunit interface and may play a role in the structure and function of the aminoacyl-tRNA binding site. The chain is Large ribosomal subunit protein bL19 from Paenarthrobacter aurescens (strain TC1).